Reading from the N-terminus, the 484-residue chain is PTS system MurNAc-GlcNAc-specific EIIBC component (484 aa).

The PTS EIIB type-1 domain maps to 5–87; it reads QQLAERIIAA…AELSGVKLGD (83 aa). The active-site Phosphocysteine intermediate; for EIIB activity is Cys-27. In terms of domain architecture, PTS EIIC type-1 spans 130-484; that stretch reads KSIANIFIPL…AMRQTDLLGD (355 aa). 10 helical membrane-spanning segments follow: residues 135–155, 160–180, 200–220, 234–254, 274–294, 305–325, 349–369, 384–404, 408–428, and 450–470; these read IFIPLIPAFIGAGLIGGIAAV, MVAGYISGAWITQLITVFNVI, FGATPGLGGVIGGTTLLTGIA, LQPGQGGIIGVIFAVWILSIV, IALLIVGLLTIFIFMPLAGFV, IISIGGVFSGFIIGASFLPLV, LLPIAAMAGAGQVGAALALWV, ALPVGFLGIGEPLIYGVTLPL, FLTACIGGGIGGAVIGGIGHI, and LGYIAGLLTAYAGGFVCTYLF.

The protein resides in the cell membrane. It carries out the reaction N-acetyl-beta-D-muramate-(1-&gt;4)-N-acetyl-D-glucosamine(out) + N(pros)-phospho-L-histidyl-[protein] = 6-phospho-N-acetyl-beta-D-muramate-(1-&gt;4)-N-acetyl-D-glucosamine(in) + L-histidyl-[protein]. Its pathway is cell wall biogenesis; peptidoglycan recycling. Its function is as follows. The phosphoenolpyruvate-dependent sugar phosphotransferase system (sugar PTS), a major carbohydrate active transport system, catalyzes the phosphorylation of incoming sugar substrates concomitantly with their translocation across the cell membrane. This system is involved in the uptake and phosphorylation of MurNAc-GlcNAc, the principle peptidoglycan turnover product of S.aureus, yielding cytoplasmic MurNAc 6P-GlcNAc. In Staphylococcus aureus (strain bovine RF122 / ET3-1), this protein is PTS system MurNAc-GlcNAc-specific EIIBC component.